Reading from the N-terminus, the 263-residue chain is Protein M1627_2099 (263 aa).

The protein belongs to the CinA family.

The protein is Protein M1627_2099 of Saccharolobus islandicus (strain M.16.27) (Sulfolobus islandicus).